The chain runs to 266 residues: Putative carbamate hydrolase RutD (266 aa).

The region spanning 15–239 (PVVVLSAGLG…RVEMPWGGHA (225 aa)) is the AB hydrolase-1 domain.

This sequence belongs to the AB hydrolase superfamily. Hydrolase RutD family.

The catalysed reaction is carbamate + 2 H(+) = NH4(+) + CO2. In terms of biological role, involved in pyrimidine catabolism. May facilitate the hydrolysis of carbamate, a reaction that can also occur spontaneously. The protein is Putative carbamate hydrolase RutD of Klebsiella variicola (strain At-22).